Consider the following 396-residue polypeptide: Probable intron-encoded endonuclease aI3 (396 aa).

Residues 51 to 90 form a disordered region; it reads TNNTNNNNPADSSSYESRMRAAGNSNSNSNSNSDSNINNT. The span at 74-90 shows a compositional bias: low complexity; it reads NSNSNSNSNSDSNINNT.

The protein belongs to the LAGLIDADG endonuclease family.

Its subcellular location is the mitochondrion. Functionally, mitochondrial DNA endonuclease involved in intron homing. The polypeptide is Probable intron-encoded endonuclease aI3 (aI3) (Kluyveromyces lactis (strain ATCC 8585 / CBS 2359 / DSM 70799 / NBRC 1267 / NRRL Y-1140 / WM37) (Yeast)).